The primary structure comprises 329 residues: 2-oxoglutarate-dependent dioxygenase mpl2 (329 aa).

Residues 183-288 (PACPLRLLHY…RYSVVFFFDG (106 aa)) form the Fe2OG dioxygenase domain. 3 residues coordinate Fe cation: His-211, Asp-213, and His-269. Arg-279 lines the 2-oxoglutarate pocket.

The protein belongs to the iron/ascorbate-dependent oxidoreductase family. It depends on Fe(2+) as a cofactor.

The protein operates within mycotoxin biosynthesis. 2-oxoglutarate-dependent dioxygenase; part of the gene cluster that mediates the biosynthesis of the mycotoxin citrinin, a hepato-nephrotoxic compound to humans due to inhibition of respiration complex III. The pathway begins with the synthesis of a keto-aldehyde intermediate by the citrinin PKS (pksCT) from successive condensations of 4 malonyl-CoA units, presumably with a simple acetyl-CoA starter unit. Release of the keto-aldehyde intermediate is consistent with the presence of the C-terminal reductive release domain. Mp11 collaborates with pksCT by catalyzing the hydrolysis of ACP-bound acyl intermediates to free the ACP from stalled intermediates. Mpl2 then catalyzes the oxidation of the C-12 methyl of the ketone intermediate to an alcohol intermediate which is further oxidized by the oxidoreductase mpl7 to produce a bisaldehyde intermediate. The fourth catalytic step is catalyzed by the mpl4 aldehyde dehydrogenase. The final transformation is the reduction of C-3 by mpl6 to provide the chemically stable citrinin nucleus. The protein is 2-oxoglutarate-dependent dioxygenase mpl2 of Monascus purpureus (Red mold).